The chain runs to 322 residues: Corticotropin-releasing factor-binding protein (322 aa).

A signal peptide spans 1–24; the sequence is MSPNFKLQCHFILIFLTALRGESR. Intrachain disulfides connect Cys-60-Cys-81, Cys-104-Cys-141, Cys-183-Cys-205, Cys-237-Cys-264, and Cys-277-Cys-318. Asn-204 carries N-linked (GlcNAc...) asparagine glycosylation.

It belongs to the CRF-binding protein family.

The protein resides in the secreted. Functionally, binds CRF and inactivates it. May prevent inappropriate pituitary-adrenal stimulation in pregnancy. The polypeptide is Corticotropin-releasing factor-binding protein (CRHBP) (Homo sapiens (Human)).